The chain runs to 88 residues: Translation initiation factor IF-1 1 (88 aa).

Residues 1–72 (MSKEDMIELE…TKGRINFRHP (72 aa)) enclose the S1-like domain. The interval 66-88 (RINFRHPTANPGAGPRPSHHHRR) is disordered.

The protein belongs to the IF-1 family. Component of the 30S ribosomal translation pre-initiation complex which assembles on the 30S ribosome in the order IF-2 and IF-3, IF-1 and N-formylmethionyl-tRNA(fMet); mRNA recruitment can occur at any time during PIC assembly.

It is found in the cytoplasm. In terms of biological role, one of the essential components for the initiation of protein synthesis. Stabilizes the binding of IF-2 and IF-3 on the 30S subunit to which N-formylmethionyl-tRNA(fMet) subsequently binds. Helps modulate mRNA selection, yielding the 30S pre-initiation complex (PIC). Upon addition of the 50S ribosomal subunit IF-1, IF-2 and IF-3 are released leaving the mature 70S translation initiation complex. The protein is Translation initiation factor IF-1 1 of Chromobacterium violaceum (strain ATCC 12472 / DSM 30191 / JCM 1249 / CCUG 213 / NBRC 12614 / NCIMB 9131 / NCTC 9757 / MK).